A 346-amino-acid chain; its full sequence is Flap endonuclease 1 (346 aa).

The tract at residues 1–100 is N-domain; the sequence is MGVDIKELVE…KELERRYQIK (100 aa). The Mg(2+) site is built by aspartate 29, aspartate 82, glutamate 154, glutamate 156, aspartate 175, aspartate 177, and aspartate 238. The segment at 118–260 is I-domain; sequence EARIYAQQTS…KALKLVKELK (143 aa). The segment at 336 to 344 is interaction with PCNA; that stretch reads KQQSLESWF.

This sequence belongs to the XPG/RAD2 endonuclease family. FEN1 subfamily. In terms of assembly, interacts with PCNA. PCNA stimulates the nuclease activity without altering cleavage specificity. Mg(2+) serves as cofactor.

Functionally, structure-specific nuclease with 5'-flap endonuclease and 5'-3' exonuclease activities involved in DNA replication and repair. During DNA replication, cleaves the 5'-overhanging flap structure that is generated by displacement synthesis when DNA polymerase encounters the 5'-end of a downstream Okazaki fragment. Binds the unpaired 3'-DNA end and kinks the DNA to facilitate 5' cleavage specificity. Cleaves one nucleotide into the double-stranded DNA from the junction in flap DNA, leaving a nick for ligation. Also involved in the base excision repair (BER) pathway. Acts as a genome stabilization factor that prevents flaps from equilibrating into structures that lead to duplications and deletions. Also possesses 5'-3' exonuclease activity on nicked or gapped double-stranded DNA. The protein is Flap endonuclease 1 of Thermofilum pendens (strain DSM 2475 / Hrk 5).